The following is a 250-amino-acid chain: ATP synthase subunit a (250 aa).

Transmembrane regions (helical) follow at residues 29–49, 84–104, 114–134, 143–163, 189–209, and 216–236; these read ASLFMVATVACAAGFLYFATS, FFPMVFSLFMFVLTANLLGMM, IVVTFALAIFVIGTVLVYGFY, LFVPSGVPGALLLLVVPIEVI, VFAGFVASLGSLGALGVGGAL, and VALTGLEFLVAFLQAYVFAVL.

This sequence belongs to the ATPase A chain family. In terms of assembly, F-type ATPases have 2 components, CF(1) - the catalytic core - and CF(0) - the membrane proton channel. CF(1) has five subunits: alpha(3), beta(3), gamma(1), delta(1), epsilon(1). CF(0) has three main subunits: a(1), b(2) and c(9-12). The alpha and beta chains form an alternating ring which encloses part of the gamma chain. CF(1) is attached to CF(0) by a central stalk formed by the gamma and epsilon chains, while a peripheral stalk is formed by the delta and b chains.

The protein resides in the cell inner membrane. Key component of the proton channel; it plays a direct role in the translocation of protons across the membrane. This chain is ATP synthase subunit a, found in Allorhizobium ampelinum (strain ATCC BAA-846 / DSM 112012 / S4) (Agrobacterium vitis (strain S4)).